We begin with the raw amino-acid sequence, 254 residues long: Hydroxyethylthiazole kinase (254 aa).

Met40 lines the substrate pocket. ATP-binding residues include Arg116 and Ser162. Substrate is bound at residue Gly189.

Belongs to the Thz kinase family. Requires Mg(2+) as cofactor.

The enzyme catalyses 5-(2-hydroxyethyl)-4-methylthiazole + ATP = 4-methyl-5-(2-phosphooxyethyl)-thiazole + ADP + H(+). It participates in cofactor biosynthesis; thiamine diphosphate biosynthesis; 4-methyl-5-(2-phosphoethyl)-thiazole from 5-(2-hydroxyethyl)-4-methylthiazole: step 1/1. In terms of biological role, catalyzes the phosphorylation of the hydroxyl group of 4-methyl-5-beta-hydroxyethylthiazole (THZ). The protein is Hydroxyethylthiazole kinase of Limosilactobacillus fermentum (strain NBRC 3956 / LMG 18251) (Lactobacillus fermentum).